The primary structure comprises 394 residues: Elongation factor Tu 1 (394 aa).

Positions 10–204 (KPHVNVGTIG…HLDTYIPEPE (195 aa)) constitute a tr-type G domain. The G1 stretch occupies residues 19–26 (GHVDHGKT). 19 to 26 (GHVDHGKT) provides a ligand contact to GTP. Residue Thr-26 coordinates Mg(2+). Residues 60-64 (GITIN) are G2. A G3 region spans residues 81 to 84 (DCPG). Residues 81–85 (DCPGH) and 136–139 (NKCD) contribute to the GTP site. A G4 region spans residues 136-139 (NKCD). The segment at 174–176 (SAL) is G5.

It belongs to the TRAFAC class translation factor GTPase superfamily. Classic translation factor GTPase family. EF-Tu/EF-1A subfamily. As to quaternary structure, monomer.

It localises to the cytoplasm. The catalysed reaction is GTP + H2O = GDP + phosphate + H(+). In terms of biological role, GTP hydrolase that promotes the GTP-dependent binding of aminoacyl-tRNA to the A-site of ribosomes during protein biosynthesis. This is Elongation factor Tu 1 from Haemophilus influenzae (strain 86-028NP).